The following is a 206-amino-acid chain: GCN5-like protein acetyltransferase Rv2170 (206 aa).

Positions Glu44–Pro205 constitute an N-acetyltransferase domain. Tyr176 acts as the Proton donor in catalysis.

This sequence belongs to the acetyltransferase family.

The enzyme catalyses L-lysyl-[protein] + acetyl-CoA = N(6)-acetyl-L-lysyl-[protein] + CoA + H(+). The catalysed reaction is propanoyl-CoA + L-lysyl-[protein] = N(6)-propanoyl-L-lysyl-[protein] + CoA + H(+). It catalyses the reaction succinyl-CoA + L-lysyl-[protein] = N(6)-succinyl-L-lysyl-[protein] + CoA + H(+). Its function is as follows. Acetyltransferase involved in the post-translational regulation of the central metabolic enzyme isocitrate dehydrogenase 1 (ICDH-1) through lysine acetylation. Catalyzes the acetylation of ICDH-1 at Lys-30 and Lys-129, using acetyl-CoA as a donor, leading to a reduction of ICDH-1 enzyme activity. Can also use propionyl-CoA and succinyl-CoA as donors. Cannot act on the isocitrate dehydrogenase 2 (ICDH-2). Might play a role in regulating the TCA cycle and methylcitrate cycle when M.tuberculosis utilizes fatty acid as carbon source. In addition, it can acetylate the amino group of isoniazid (INH), one of the first-line drugs used for the treatment of tuberculosis, thereby canceling out the drug toxicity. Acts by catalyzing the transfer of an acetyl group from acetyl-CoA to INH. Following acetylation, INH is broken down into isonicotinic acid and acetylhydrazine. M.smegmatis and M.tuberculosis H37Ra strains overexpressing Rv2170 are resistant to INH. Has little or no acetyltransferase activity with other antibiotics such as streptomycin, neomycin, kanamycin, amikacin, apramycin and gentamicin. The chain is GCN5-like protein acetyltransferase Rv2170 from Mycobacterium tuberculosis (strain ATCC 25618 / H37Rv).